The primary structure comprises 85 residues: Mitochondrial protein pet191 homolog (85 aa).

In terms of domain architecture, CHCH spans 18–61 (HSDCMFVKKKSARECLKNKDELPEECKNLIEAYGECKRQMLDMT). Residues 21–32 (CMFVKKKSAREC) carry the Cx10C motif motif. Cystine bridges form between Cys21–Cys53 and Cys32–Cys43. The short motif at 43 to 53 (CKNLIEAYGEC) is the Cx9C motif element. The interval 65–85 (RIAPEKNTDQDTEKPSNVDEQ) is disordered.

This sequence belongs to the PET191 family.

The protein resides in the mitochondrion. Functionally, involved in the assembly of cytochrome c oxidase. The polypeptide is Mitochondrial protein pet191 homolog (Schizosaccharomyces pombe (strain 972 / ATCC 24843) (Fission yeast)).